A 467-amino-acid polypeptide reads, in one-letter code: 3-isopropylmalate dehydratase large subunit (467 aa).

[4Fe-4S] cluster-binding residues include C347, C407, and C410.

It belongs to the aconitase/IPM isomerase family. LeuC type 1 subfamily. In terms of assembly, heterodimer of LeuC and LeuD. [4Fe-4S] cluster is required as a cofactor.

The catalysed reaction is (2R,3S)-3-isopropylmalate = (2S)-2-isopropylmalate. It participates in amino-acid biosynthesis; L-leucine biosynthesis; L-leucine from 3-methyl-2-oxobutanoate: step 2/4. In terms of biological role, catalyzes the isomerization between 2-isopropylmalate and 3-isopropylmalate, via the formation of 2-isopropylmaleate. In Pelagibacter ubique (strain HTCC1062), this protein is 3-isopropylmalate dehydratase large subunit.